The following is a 346-amino-acid chain: DNA repair protein XRCC3 (346 aa).

N-acetylmethionine is present on Met-1. ATP is bound at residue 107–114; it reads GRSSAGKT.

The protein belongs to the RecA family. RAD51 subfamily. As to quaternary structure, interacts with RAD51C and RAD51. Part of the CX3 complex consisting of RAD51C and XRCC3; the complex has a ring-like structure arranged into a flat disk around a central channel; CX3 can interact with RAD51 in vitro. Forms a complex with FANCD2, BRCA2 and phosphorylated FANCG. Interacts with SWSAP1 and ZSWIM7; involved in homologous recombination repair. Interacts directly with PALB2 which may serve as a scaffold for a HR complex containing PALB2, BRCA2, RAD51C, RAD51 and XRCC3.

The protein localises to the nucleus. It localises to the cytoplasm. It is found in the perinuclear region. The protein resides in the mitochondrion. In terms of biological role, involved in the homologous recombination repair (HRR) pathway of double-stranded DNA, thought to repair chromosomal fragmentation, translocations and deletions. Part of the RAD51 paralog protein complex CX3 which acts in the BRCA1-BRCA2-dependent HR pathway. Upon DNA damage, CX3 acts downstream of RAD51 recruitment; the complex binds predominantly to the intersection of the four duplex arms of the Holliday junction (HJ) and to junctions of replication forks. Involved in HJ resolution and thus in processing HR intermediates late in the DNA repair process; the function may be linked to the CX3 complex and seems to involve GEN1 during mitotic cell cycle progression. Part of a PALB2-scaffolded HR complex containing BRCA2 and RAD51C and which is thought to play a role in DNA repair by HR. Plays a role in regulating mitochondrial DNA copy number under conditions of oxidative stress in the presence of RAD51 and RAD51C. This chain is DNA repair protein XRCC3 (XRCC3), found in Homo sapiens (Human).